A 362-amino-acid chain; its full sequence is Shewanella-like protein phosphatase 1 (362 aa).

The signal sequence occupies residues 1–23 (MIFKKALYILLFLYIAIVKKGES). Residues aspartate 65, histidine 67, aspartate 101, and asparagine 136 each coordinate Mn(2+). Histidine 137 (proton donor) is an active-site residue. Mn(2+) is bound at residue histidine 196.

The protein belongs to the metallophosphoesterase superfamily. SLP family. It depends on Mn(2+) as a cofactor.

Phosphatase which plays an essential role in the development and differentiation of the ookinete and in the formation of ookinete micronemes. The sequence is that of Shewanella-like protein phosphatase 1 from Plasmodium berghei (strain Anka).